Consider the following 689-residue polypeptide: Armadillo-like helical domain-containing protein 3 (689 aa).

A helical membrane pass occupies residues 520–538 (IFQLALQVVNLFNMFITYG).

This sequence belongs to the ARMH3 family.

It localises to the golgi apparatus membrane. The protein resides in the cytoplasm. In terms of biological role, may be involved in Golgi maintenance and protein secretion. The sequence is that of Armadillo-like helical domain-containing protein 3 from Danio rerio (Zebrafish).